Here is a 1129-residue protein sequence, read N- to C-terminus: Protein LANA1 (1129 aa).

Disordered regions lie at residues 1–988 and 1110–1129; these read MAPP…PVPY and LPLT…QEMT. Basic and acidic residues-rich tracts occupy residues 28 to 41 and 48 to 58; these read RSPE…DLHL and VADSVDGRECG. Pro residues predominate over residues 85 to 104; the sequence is PVAPIPSPAPATPLPPPALL. Polar residues predominate over residues 139-156; it reads SPESSQRPPLSSPTGRPD. Residues 161-185 are compositionally biased toward pro residues; it reads MRPPPSQQTTPPHSPTTPPPEPPSK. Positions 186–197 are enriched in low complexity; sequence SSPDSLAPSTLR. Positions 207-217 are enriched in polar residues; that stretch reads PQGPSTLNPIC. The span at 263–275 shows a compositional bias: low complexity; it reads PISIGSSSPSEGS. Composition is skewed to basic and acidic residues over residues 292-301 and 314-323; these read EASKNEKECS and EISKESQVDK. Acidic residues predominate over residues 324–419; the sequence is DDNDNKDDEE…DKKEDEEDGG (96 aa). Residues 431-471 are compositionally biased toward low complexity; sequence QQQQEPQQQEPQQQEPQQQEPQQQEPQQQEPQQQEPQQQEP. A compositionally biased stretch (basic and acidic residues) spans 472–528; sequence QQREPQQREPQQREPQQREPQQREPQQREPQQREPQQREPQQREPQQREPQQREPQQ. The segment covering 529-596 has biased composition (low complexity); that stretch reads REPQQQEPQQ…QQQEPQQQDE (68 aa). Residues 597–888 are compositionally biased toward acidic residues; it reads QQQDEQQQDE…QELEEVEEQE (292 aa). The span at 924–934 shows a compositional bias: polar residues; the sequence is THEQIASSPPG. Basic residues predominate over residues 962 to 979; it reads PGVRMRRVPVTHPKKPHP. The interval 1008–1129 is DNA-binding domain; it reads FLGKDGRRDP…GPGDSPQEMT (122 aa).

In terms of assembly, homooligomer. Interacts with host BRD2. Interacts with host RELA, ELOB, ELOC and CUL5; these interactions induce the proteasomal degradation of host RELA. Interacts with host TRIM28 and NFE2L2/NRF2; these interactions are essential for the shutdown of lytic gene expression during the early stage of infection. Interacts (via N-terminus) with host histones H2A and H2B; these interactions are essential to dock LANA1 onto chromosomes. Interacts with host BUB1 and PCNA. Interacts with host NAP1L1; this interaction is required for LANA1-dependent DNA replication. Interacts with components of the host MLL1 complex KMT2A and WDR5.

Its subcellular location is the host nucleus. In terms of biological role, multifunctional protein that plays a role in the replication and long-term persistence of the viral episomal genome in dividing cells. Binds to mitotic chromosomes via its N-terminal region and to a 16-bp imperfect palindrome within the origin of replication (oriP) located in the viral terminal repeat (TR) through its C-terminal. Tethers viral episomes to chromosomes during mitosis. Plays a critical role in the shutdown of lytic gene expression during the early stage of infection by interacting with host TRIM28. Also plays a role in the repression of host NF-kappa-B activity upon TNF-alpha stimulation by promoting the proteasomal degradation of host RELA. Promotes nuclear localization and cleavage of host STAT6 leading to constitutive activation of the IL13/STAT6 signaling pathway to promote viral latency. Interacts with and modulates the histone methyltransferase MLL1 complex activity, leading to its recruitment on viral DNA terminal repeats changing the dynamic of histone H3 methylated 'Lys-4'(H3K4me) profile during the initial hours following infection. In Homo sapiens (Human), this protein is Protein LANA1 (LANA1).